Here is an 89-residue protein sequence, read N- to C-terminus: Small ribosomal subunit protein uS15 (89 aa).

It belongs to the universal ribosomal protein uS15 family. Part of the 30S ribosomal subunit. Forms a bridge to the 50S subunit in the 70S ribosome, contacting the 23S rRNA.

Its function is as follows. One of the primary rRNA binding proteins, it binds directly to 16S rRNA where it helps nucleate assembly of the platform of the 30S subunit by binding and bridging several RNA helices of the 16S rRNA. Forms an intersubunit bridge (bridge B4) with the 23S rRNA of the 50S subunit in the ribosome. The sequence is that of Small ribosomal subunit protein uS15 from Anaeromyxobacter sp. (strain Fw109-5).